We begin with the raw amino-acid sequence, 222 residues long: 2-hydroxy-3-keto-5-methylthiopentenyl-1-phosphate phosphatase (222 aa).

The protein belongs to the HAD-like hydrolase superfamily. MtnX family.

It catalyses the reaction 2-hydroxy-5-methylsulfanyl-3-oxopent-1-enyl phosphate + H2O = 1,2-dihydroxy-5-(methylsulfanyl)pent-1-en-3-one + phosphate. It functions in the pathway amino-acid biosynthesis; L-methionine biosynthesis via salvage pathway; L-methionine from S-methyl-5-thio-alpha-D-ribose 1-phosphate: step 4/6. Dephosphorylates 2-hydroxy-3-keto-5-methylthiopentenyl-1-phosphate (HK-MTPenyl-1-P) yielding 1,2-dihydroxy-3-keto-5-methylthiopentene (DHK-MTPene). The sequence is that of 2-hydroxy-3-keto-5-methylthiopentenyl-1-phosphate phosphatase from Brevibacillus brevis (strain 47 / JCM 6285 / NBRC 100599).